We begin with the raw amino-acid sequence, 505 residues long: AMP phosphorylase (505 aa).

AMP contacts are provided by residues G170, 196 to 201 (SRAITS), and T205. Residue D258 is the Proton donor of the active site. Residues S266 and K290 each coordinate AMP.

Belongs to the thymidine/pyrimidine-nucleoside phosphorylase family. Type 2 subfamily.

The catalysed reaction is AMP + phosphate = alpha-D-ribose 1,5-bisphosphate + adenine. It carries out the reaction CMP + phosphate = cytosine + alpha-D-ribose 1,5-bisphosphate. The enzyme catalyses UMP + phosphate = alpha-D-ribose 1,5-bisphosphate + uracil. Functionally, catalyzes the conversion of AMP and phosphate to adenine and ribose 1,5-bisphosphate (R15P). Exhibits phosphorylase activity toward CMP and UMP in addition to AMP. Functions in an archaeal AMP degradation pathway, together with R15P isomerase and RubisCO. The protein is AMP phosphorylase of Methanococcus maripaludis (strain C6 / ATCC BAA-1332).